Consider the following 270-residue polypeptide: Tryptophan 2,3-dioxygenase-like protein (270 aa).

This sequence belongs to the tryptophan 2,3-dioxygenase family.

The protein is Tryptophan 2,3-dioxygenase-like protein of Xanthomonas campestris pv. campestris (strain 8004).